The sequence spans 359 residues: Type-1 angiotensin II receptor A (359 aa).

At 1–25 (MALNSSTEDGIKRIQDDCPRAGRHS) the chain is on the extracellular side. Asn4 carries N-linked (GlcNAc...) asparagine glycosylation. Residues Gln15 and Asp17 each contribute to the angiotensin II site. 2 disulfide bridges follow: Cys18–Cys274 and Cys101–Cys180. The helical transmembrane segment at 26–55 (YIFVMIPTLYSIIFVVGIFGNSLVVIVIYF) threads the bilayer. Residues 56 to 61 (YMKLKT) lie on the Cytoplasmic side of the membrane. A helical transmembrane segment spans residues 62-89 (VASVFLLNLALADLCFLLTLPLWAVYTA). Residues 90–98 (MEYRWPFGN) are Extracellular-facing. A helical transmembrane segment spans residues 99-125 (HLCKIASASVSFNLYASVFLLTCLSID). Residues 126–141 (RYLAIVHPMKSRLRRT) lie on the Cytoplasmic side of the membrane. A helical transmembrane segment spans residues 142–165 (MLVAKVTCIIIWLMAGLASLPAVI). The Extracellular portion of the chain corresponds to 166–190 (HRNVYFIENTNITVCAFHYESRNST). Arg167 provides a ligand contact to angiotensin II. Asn176 carries N-linked (GlcNAc...) asparagine glycosylation. Residues Phe182, His183, and Tyr184 each contribute to the angiotensin II site. A glycan (N-linked (GlcNAc...) asparagine) is linked at Asn188. The helical transmembrane segment at 191-216 (LPIGLGLTKNILGFLFPFLIILTSYT) threads the bilayer. Lys199 contributes to the angiotensin II binding site. Over 217–239 (LIWKALKKAYEIQKNKPRNDDIF) the chain is Cytoplasmic. Residues 240 to 268 (RIIMAIVLFFFFSWVPHQIFTFLDVLIQL) traverse the membrane as a helical segment. The Extracellular segment spans residues 269–278 (GVIHDCKIAD). Residues 279-304 (IVDTAMPITICIAYFNNCLNPLFYGF) form a helical membrane-spanning segment. At 305–359 (LGKKFKKYFLQLLKYIPPKAKSHSSLSTKMSTLSYRPSDNMSSAAKKPASCSEVE) the chain is on the cytoplasmic side. Residues 335–347 (STLSYRPSDNMSS) show a composition bias toward polar residues. The interval 335–359 (STLSYRPSDNMSSAAKKPASCSEVE) is disordered. A lipid anchor (S-palmitoyl cysteine) is attached at Cys355.

Belongs to the G-protein coupled receptor 1 family. As to quaternary structure, interacts with MAS1. Interacts with ARRB1. Interacts with FLNA (via filamin repeat 21); increases PKA-mediated phosphorylation of FLNA. In terms of processing, C-terminal Ser or Thr residues may be phosphorylated.

The protein resides in the cell membrane. Receptor for angiotensin II, a vasoconstricting peptide, which acts as a key regulator of blood pressure and sodium retention by the kidney. The activated receptor in turn couples to G-alpha proteins G(q) (GNAQ, GNA11, GNA14 or GNA15) and thus activates phospholipase C and increases the cytosolic Ca(2+) concentrations, which in turn triggers cellular responses such as stimulation of protein kinase C. This chain is Type-1 angiotensin II receptor A (Agtr1a), found in Mus musculus (Mouse).